Reading from the N-terminus, the 690-residue chain is Glutaminase A (690 aa).

The signal sequence occupies residues 1–20; sequence MMHFLSFCLSVASLVSYAGA. N-linked (GlcNAc...) asparagine glycans are attached at residues N80, N96, N435, N508, N528, N538, and N571.

It belongs to the fungal glutaminase gtaA family.

It is found in the secreted. The enzyme catalyses L-glutamine + H2O = L-glutamate + NH4(+). With respect to regulation, activity is inhibited by about 80% in the presence of 18% sodium chloride. In terms of biological role, glutaminase catalyzes the hydrolysis of glutamine to glutamic acid and plays a key role in nitrogen metabolism. Catalyzes the hydrolysis not only of L-glutamine but also of D-glutamine. This is Glutaminase A from Aspergillus oryzae (strain ATCC 42149 / RIB 40) (Yellow koji mold).